A 119-amino-acid chain; its full sequence is Holo-[acyl-carrier-protein] synthase (119 aa).

Mg(2+)-binding residues include aspartate 8 and glutamate 60.

Belongs to the P-Pant transferase superfamily. AcpS family. Mg(2+) is required as a cofactor.

The protein resides in the cytoplasm. It carries out the reaction apo-[ACP] + CoA = holo-[ACP] + adenosine 3',5'-bisphosphate + H(+). Its function is as follows. Transfers the 4'-phosphopantetheine moiety from coenzyme A to a Ser of acyl-carrier-protein. The protein is Holo-[acyl-carrier-protein] synthase of Staphylococcus haemolyticus (strain JCSC1435).